The following is a 91-amino-acid chain: Cell division topological specificity factor (91 aa).

Belongs to the MinE family.

Functionally, prevents the cell division inhibition by proteins MinC and MinD at internal division sites while permitting inhibition at polar sites. This ensures cell division at the proper site by restricting the formation of a division septum at the midpoint of the long axis of the cell. The polypeptide is Cell division topological specificity factor (Caldanaerobacter subterraneus subsp. tengcongensis (strain DSM 15242 / JCM 11007 / NBRC 100824 / MB4) (Thermoanaerobacter tengcongensis)).